Here is a 246-residue protein sequence, read N- to C-terminus: 1-(5-phosphoribosyl)-5-[(5-phosphoribosylamino)methylideneamino] imidazole-4-carboxamide isomerase (246 aa).

Asp-8 functions as the Proton acceptor in the catalytic mechanism. Catalysis depends on Asp-129, which acts as the Proton donor.

The protein belongs to the HisA/HisF family.

It localises to the cytoplasm. It carries out the reaction 1-(5-phospho-beta-D-ribosyl)-5-[(5-phospho-beta-D-ribosylamino)methylideneamino]imidazole-4-carboxamide = 5-[(5-phospho-1-deoxy-D-ribulos-1-ylimino)methylamino]-1-(5-phospho-beta-D-ribosyl)imidazole-4-carboxamide. It functions in the pathway amino-acid biosynthesis; L-histidine biosynthesis; L-histidine from 5-phospho-alpha-D-ribose 1-diphosphate: step 4/9. The polypeptide is 1-(5-phosphoribosyl)-5-[(5-phosphoribosylamino)methylideneamino] imidazole-4-carboxamide isomerase (Methylocella silvestris (strain DSM 15510 / CIP 108128 / LMG 27833 / NCIMB 13906 / BL2)).